Consider the following 67-residue polypeptide: Protein AaeX (67 aa).

2 helical membrane-spanning segments follow: residues 3–23 (LFPV…ELLL) and 43–63 (FVWH…YLIS).

This sequence belongs to the AaeX family.

Its subcellular location is the cell membrane. The polypeptide is Protein AaeX (Escherichia coli O1:K1 / APEC).